Reading from the N-terminus, the 595-residue chain is Beta-lactamase-like protein ARB_00930 (595 aa).

The first 18 residues, 1 to 18 (MVVCFLWLLLPYAATTLS), serve as a signal peptide directing secretion. N70 and N102 each carry an N-linked (GlcNAc...) asparagine glycan. Catalysis depends on S117, which acts as the Acyl-ester intermediate. N-linked (GlcNAc...) asparagine glycans are attached at residues N147, N156, and N195. The Proton acceptor role is filled by Y235. N-linked (GlcNAc...) asparagine glycans are attached at residues N249, N461, and N473.

The protein belongs to the beta-lactamase family.

The protein resides in the secreted. The enzyme catalyses a beta-lactam + H2O = a substituted beta-amino acid. This Arthroderma benhamiae (strain ATCC MYA-4681 / CBS 112371) (Trichophyton mentagrophytes) protein is Beta-lactamase-like protein ARB_00930.